Reading from the N-terminus, the 389-residue chain is Cytochrome b (389 aa).

4 helical membrane passes run 32–52 (FGSL…FLAM), 76–98 (WIVR…AHIG), 113–133 (LWSI…LGYV), and 179–199 (FFSL…AHFM). 2 residues coordinate heme b: His-82 and His-96. Positions 183 and 197 each coordinate heme b. His-202 lines the a ubiquinone pocket. Helical transmembrane passes span 225–245 (FIFK…VIVF), 289–309 (LLGV…PLTD), 321–341 (AMKF…WLGS), and 348–368 (YLEI…VIVP).

Belongs to the cytochrome b family. In terms of assembly, fungal cytochrome b-c1 complex contains 10 subunits; 3 respiratory subunits, 2 core proteins and 5 low-molecular weight proteins. Cytochrome b-c1 complex is a homodimer. It depends on heme b as a cofactor.

It localises to the mitochondrion inner membrane. Functionally, component of the ubiquinol-cytochrome c reductase complex (complex III or cytochrome b-c1 complex) that is part of the mitochondrial respiratory chain. The b-c1 complex mediates electron transfer from ubiquinol to cytochrome c. Contributes to the generation of a proton gradient across the mitochondrial membrane that is then used for ATP synthesis. In Strobilurus tenacellus, this protein is Cytochrome b (COB).